Here is a 297-residue protein sequence, read N- to C-terminus: Acetaldehyde dehydrogenase (297 aa).

An NAD(+)-binding site is contributed by 18-21 (TGNI). The active-site Acyl-thioester intermediate is the Cys133. Residues 165-173 (SAGPATRLN) and Asn275 contribute to the NAD(+) site.

Belongs to the acetaldehyde dehydrogenase family.

The enzyme catalyses acetaldehyde + NAD(+) + CoA = acetyl-CoA + NADH + H(+). The sequence is that of Acetaldehyde dehydrogenase from Spirochaeta aurantia.